Consider the following 821-residue polypeptide: Cell wall integrity transcriptional regulator CAS5 (821 aa).

Disordered regions lie at residues 42–66 (HLQSLQQQSQVQSQAPQQVQSLNQH), 219–245 (FESPQSHIQSQPSYSQGYHNQNSLSTP), 305–432 (TKSN…STSQ), 544–576 (QEEEQEHQDEQMEIDSFESNEKNARPTLSTSSL), and 607–750 (VKQE…KHKC). Positions 222–245 (PQSHIQSQPSYSQGYHNQNSLSTP) are enriched in polar residues. The span at 305 to 318 (TKSNSTSSYNSTLN) shows a compositional bias: low complexity. Residues 319-329 (PFYTPSQQLSS) show a composition bias toward polar residues. Residues 372–387 (QLRKAKSYTSLLRKKK) are compositionally biased toward basic residues. The span at 396-412 (QNQQHQQQQQQQQQQQQ) shows a compositional bias: low complexity. Over residues 422 to 432 (QNLSFPNSTSQ) the composition is skewed to polar residues. Residues 545–561 (EEEQEHQDEQMEIDSFE) are compositionally biased toward acidic residues. Composition is skewed to low complexity over residues 662 to 674 (LVNKGNKTNNNDT) and 684 to 693 (KNTNGNGNND). The span at 694–714 (NDNDSEENNDNVDDADDDDDG) shows a compositional bias: acidic residues. 2 C2H2-type zinc fingers span residues 748 to 770 (HKCPICESRFQRPEHVKRHLKSH) and 776 to 801 (FECQMPNCGKRFNRKDNLKAHLKKIH). Serine 769 bears the Phosphoserine mark.

In terms of processing, phosphorylation at Ser-769 and probably additional serine residues. GLC7 dephosphorylates CAS5 in response to cell wall stress which leads to its translocation to the nucleus.

Its subcellular location is the nucleus. The protein resides in the cytoplasm. Transcription factor that acts with ADA2 to promote cell wall integrity. Regulates the expression of target genes in concert with the transcriptional regulators SWI4 and SWI6. Crucial for proper cell cycle dynamics and responses to echinocandins, which inhibit beta-1,3-glucan synthesis. Has distinct transcriptional targets under basal and stress conditions. Also regulates a transcriptional network that influences the response to fluconazole. Plays a key role in adherence, hyphal development, and virulence. Acts as a repressor of hypha-specific genes during yeast-form growth. This chain is Cell wall integrity transcriptional regulator CAS5, found in Candida albicans (strain SC5314 / ATCC MYA-2876) (Yeast).